A 427-amino-acid chain; its full sequence is MESLTLQPIARVDGTINLPGSKSVSNRALLLAALANGTTVLTNLLDSDDVRHMLNALKALGVQFMLSDDRTRCEVVGNGGALKSATELELFLGNAGTAMRPLAAALCLGSNDIVLTGEPRMKERPIGHLVDALRQGGAQIDYLEQKNYPPVRLRGGFTGGNVEVDGSVSSQFLTALLMTAPLAPQDTVISIKGDLVSKPYIDITLHLMKTFGVEVENQAYQRFVVRGAQQYQSPGNYLVEGDASSASYFLAAGAIKGGTVKVTGIGRNSVQGDIRFADVLEKMGAVVTWGDDFISCTQGELNAVDMDMNHIPDAAMTIATAALFAKGTTTLRNIYNWRVKETDRLFAMATELRKVGAQVEEGEDYIRVTPPAKLQVAEIGTYNDHRMAMCFSLVALSDTPVTILDPKCTAKTFPDYFEQLARISTLA.

Residues Lys-22, Ser-23, and Arg-27 each coordinate 3-phosphoshikimate. Residue Lys-22 participates in phosphoenolpyruvate binding. Gly-96 and Arg-124 together coordinate phosphoenolpyruvate. 3-phosphoshikimate contacts are provided by Ser-169, Ser-170, Gln-171, Ser-197, Asp-313, Asn-336, and Lys-340. Gln-171 is a binding site for phosphoenolpyruvate. Catalysis depends on Asp-313, which acts as the Proton acceptor. Residues Arg-344, Arg-386, and Lys-411 each contribute to the phosphoenolpyruvate site.

It belongs to the EPSP synthase family. In terms of assembly, monomer.

It localises to the cytoplasm. It carries out the reaction 3-phosphoshikimate + phosphoenolpyruvate = 5-O-(1-carboxyvinyl)-3-phosphoshikimate + phosphate. It functions in the pathway metabolic intermediate biosynthesis; chorismate biosynthesis; chorismate from D-erythrose 4-phosphate and phosphoenolpyruvate: step 6/7. Catalyzes the transfer of the enolpyruvyl moiety of phosphoenolpyruvate (PEP) to the 5-hydroxyl of shikimate-3-phosphate (S3P) to produce enolpyruvyl shikimate-3-phosphate and inorganic phosphate. The chain is 3-phosphoshikimate 1-carboxyvinyltransferase from Enterobacter sp. (strain 638).